Consider the following 179-residue polypeptide: NADH dehydrogenase [ubiquinone] 1 beta subcomplex subunit 9 (179 aa).

Ala-2 is modified (N-acetylalanine). Ser-85 carries the phosphoserine modification. The disordered stretch occupies residues 136-162 (EVKQLQEETPPGGPLTEALPPARKEGD).

Belongs to the complex I LYR family. As to quaternary structure, mammalian complex I is composed of 45 different subunits.

Its subcellular location is the mitochondrion inner membrane. Accessory subunit of the mitochondrial membrane respiratory chain NADH dehydrogenase (Complex I), that is believed to be not involved in catalysis. Complex I functions in the transfer of electrons from NADH to the respiratory chain. The immediate electron acceptor for the enzyme is believed to be ubiquinone. The sequence is that of NADH dehydrogenase [ubiquinone] 1 beta subcomplex subunit 9 (NDUFB9) from Homo sapiens (Human).